We begin with the raw amino-acid sequence, 349 residues long: Protein-glutamate methylesterase/protein-glutamine glutaminase (349 aa).

The region spanning 5-122 (RVLSVDDSAL…REGMLAYSEM (118 aa)) is the Response regulatory domain. The residue at position 56 (Asp-56) is a 4-aspartylphosphate. Residues 152 to 344 (LLSSEKLIAI…QQMLAKISAG (193 aa)) enclose the CheB-type methylesterase domain. Residues Ser-164, His-190, and Asp-286 contribute to the active site.

Belongs to the CheB family. In terms of processing, phosphorylated by CheA. Phosphorylation of the N-terminal regulatory domain activates the methylesterase activity.

Its subcellular location is the cytoplasm. The enzyme catalyses [protein]-L-glutamate 5-O-methyl ester + H2O = L-glutamyl-[protein] + methanol + H(+). It carries out the reaction L-glutaminyl-[protein] + H2O = L-glutamyl-[protein] + NH4(+). Its function is as follows. Involved in chemotaxis. Part of a chemotaxis signal transduction system that modulates chemotaxis in response to various stimuli. Catalyzes the demethylation of specific methylglutamate residues introduced into the chemoreceptors (methyl-accepting chemotaxis proteins or MCP) by CheR. Also mediates the irreversible deamidation of specific glutamine residues to glutamic acid. This Salmonella paratyphi A (strain ATCC 9150 / SARB42) protein is Protein-glutamate methylesterase/protein-glutamine glutaminase.